A 118-amino-acid polypeptide reads, in one-letter code: Vacuolar ATPase assembly integral membrane protein vma-21 (118 aa).

The Cytoplasmic segment spans residues 1–35 (MATRRIISQEKTLLEKDDRIGSSPAASEKSNITPA). A helical transmembrane segment spans residues 36–56 (VPASVIIKLLAFTFAMIVIPI). Residues 57–73 (SSYFLTVDRLFKGNSTY) lie on the Lumenal side of the membrane. Residues 74–94 (AGATAAIMANVVLIGYIIVAM) traverse the membrane as a helical segment. The Cytoplasmic segment spans residues 95 to 118 (AEDQSDQENEKKGGGGKGEGKKDL). The tract at residues 98-118 (QSDQENEKKGGGGKGEGKKDL) is disordered. Residues 102–118 (ENEKKGGGGKGEGKKDL) show a composition bias toward basic and acidic residues. The Prevents secretion from ER signature appears at 115-118 (KKDL).

The protein belongs to the VMA21 family.

The protein resides in the endoplasmic reticulum membrane. The protein localises to the endoplasmic reticulum-Golgi intermediate compartment membrane. It localises to the cytoplasmic vesicle. Its subcellular location is the COPII-coated vesicle membrane. Functionally, required for the assembly of the V0 complex of the vacuolar ATPase (V-ATPase) in the endoplasmic reticulum. This Neurospora crassa (strain ATCC 24698 / 74-OR23-1A / CBS 708.71 / DSM 1257 / FGSC 987) protein is Vacuolar ATPase assembly integral membrane protein vma-21 (vma-21).